The sequence spans 137 residues: Endoribonuclease YbeY (137 aa).

Positions 103, 107, and 113 each coordinate Zn(2+).

Belongs to the endoribonuclease YbeY family. It depends on Zn(2+) as a cofactor.

It localises to the cytoplasm. Its function is as follows. Single strand-specific metallo-endoribonuclease involved in late-stage 70S ribosome quality control and in maturation of the 3' terminus of the 16S rRNA. In Acholeplasma laidlawii (strain PG-8A), this protein is Endoribonuclease YbeY.